Here is a 109-residue protein sequence, read N- to C-terminus: Period circadian protein (109 aa).

Residues isoleucine 29 to leucine 100 are disordered. A compositionally biased stretch (low complexity) spans serine 69 to serine 97.

Forms a heterodimer with timeless (TIM); the complex then translocates into the nucleus. Phosphorylated with a circadian rhythmicity, probably by the double-time protein (dbt). Phosphorylation could be implicated in the stability of per monomer and in the formation of heterodimer per-tim.

The protein localises to the nucleus. The protein resides in the cytoplasm. Its subcellular location is the perinuclear region. In terms of biological role, essential for biological clock functions. Determines the period length of circadian and ultradian rhythms; an increase in PER dosage leads to shortened circadian rhythms and a decrease leads to lengthened circadian rhythms. Essential for the circadian rhythmicity of locomotor activity, eclosion behavior, and for the rhythmic component of the male courtship song that originates in the thoracic nervous system. The biological cycle depends on the rhythmic formation and nuclear localization of the TIM-PER complex. Light induces the degradation of TIM, which promotes elimination of PER. Nuclear activity of the heterodimer coordinatively regulates PER and TIM transcription through a negative feedback loop. Behaves as a negative element in circadian transcriptional loop. Does not appear to bind DNA, suggesting indirect transcriptional inhibition. In Loxocera albiseta (Rust fly), this protein is Period circadian protein (per).